We begin with the raw amino-acid sequence, 260 residues long: MSGEMSPIDRAKYVAAKRAVGFVEDGMRVGLGTGSTAAWMVRHLAETVDQEGMDITCVATSTRTAELARDLKLHVTTLDEVKWLDLTIDGADEFDPTLNLIKGGGGALLQEKIVATASDRMIVITDASKAVATLGAFPLPVEVIRFGWETTRTLIEETLVNVDVGGREAILRMENGMPYVTDEGNFIVDLHLERIGNPRQVSLVLNQLPGVVENGLFLDICDVVVIGKSDGSVELRDINEGSVHQEQVEVTATGNVFSDL.

Residues 33–36, 89–92, and 102–105 contribute to the substrate site; these read TGST, DGAD, and KGGG. The active-site Proton acceptor is glutamate 111. Substrate is bound at residue lysine 129.

This sequence belongs to the ribose 5-phosphate isomerase family. In terms of assembly, homodimer.

The catalysed reaction is aldehydo-D-ribose 5-phosphate = D-ribulose 5-phosphate. Its pathway is carbohydrate degradation; pentose phosphate pathway; D-ribose 5-phosphate from D-ribulose 5-phosphate (non-oxidative stage): step 1/1. In terms of biological role, catalyzes the reversible conversion of ribose-5-phosphate to ribulose 5-phosphate. In Dinoroseobacter shibae (strain DSM 16493 / NCIMB 14021 / DFL 12), this protein is Ribose-5-phosphate isomerase A.